The chain runs to 188 residues: 3-hydroxyanthranilate 3,4-dioxygenase 2 (188 aa).

Residue Arg-46 participates in O2 binding. Residues His-50, Glu-70, and His-108 each coordinate Fe cation. Substrate is bound at residue Glu-70. Substrate is bound by residues Arg-112 and Glu-122.

The protein belongs to the 3-HAO family. The cofactor is Fe(2+).

It is found in the cytoplasm. The catalysed reaction is 3-hydroxyanthranilate + O2 = (2Z,4Z)-2-amino-3-carboxymuconate 6-semialdehyde. It participates in cofactor biosynthesis; NAD(+) biosynthesis; quinolinate from L-kynurenine: step 3/3. In terms of biological role, catalyzes the oxidative ring opening of 3-hydroxyanthranilate to 2-amino-3-carboxymuconate semialdehyde, which spontaneously cyclizes to quinolinate. The polypeptide is 3-hydroxyanthranilate 3,4-dioxygenase 2 (bna1-2) (Aspergillus fumigatus (strain CBS 144.89 / FGSC A1163 / CEA10) (Neosartorya fumigata)).